A 317-amino-acid polypeptide reads, in one-letter code: Serine/threonine-protein phosphatase PP1 isozyme 1 (317 aa).

Positions 75, 77, 103, and 135 each coordinate Mn(2+). H136 (proton donor) is an active-site residue. Mn(2+) contacts are provided by H184 and H259.

Belongs to the PPP phosphatase family. PP-1 subfamily. It depends on Mn(2+) as a cofactor.

It catalyses the reaction O-phospho-L-seryl-[protein] + H2O = L-seryl-[protein] + phosphate. The enzyme catalyses O-phospho-L-threonyl-[protein] + H2O = L-threonyl-[protein] + phosphate. The polypeptide is Serine/threonine-protein phosphatase PP1 isozyme 1 (NPP1) (Nicotiana tabacum (Common tobacco)).